The sequence spans 89 residues: uncharacterized protein (89 aa).

This sequence to M.tuberculosis Rv3402c.

This is an uncharacterized protein from Mycobacterium tuberculosis (strain CDC 1551 / Oshkosh).